A 440-amino-acid polypeptide reads, in one-letter code: Enolase (440 aa).

Gln-163 serves as a coordination point for (2R)-2-phosphoglycerate. Glu-205 serves as the catalytic Proton donor. Residues Asp-242, Glu-288, and Asp-315 each contribute to the Mg(2+) site. Positions 340, 369, 370, and 391 each coordinate (2R)-2-phosphoglycerate. The active-site Proton acceptor is Lys-340.

Belongs to the enolase family. Requires Mg(2+) as cofactor.

Its subcellular location is the cytoplasm. It localises to the secreted. The protein localises to the cell surface. It catalyses the reaction (2R)-2-phosphoglycerate = phosphoenolpyruvate + H2O. It participates in carbohydrate degradation; glycolysis; pyruvate from D-glyceraldehyde 3-phosphate: step 4/5. Its function is as follows. Catalyzes the reversible conversion of 2-phosphoglycerate (2-PG) into phosphoenolpyruvate (PEP). It is essential for the degradation of carbohydrates via glycolysis. The polypeptide is Enolase (Limosilactobacillus fermentum (strain NBRC 3956 / LMG 18251) (Lactobacillus fermentum)).